The primary structure comprises 231 residues: ATP-dependent dethiobiotin synthetase BioD (231 aa).

An ATP-binding site is contributed by 12–17 (EVGKTV). T16 contributes to the Mg(2+) binding site. Residue K37 is part of the active site. S41 provides a ligand contact to substrate. ATP-binding positions include D51, 112–115 (EGAG), and 202–204 (PKL). The Mg(2+) site is built by D51 and E112.

Belongs to the dethiobiotin synthetase family. Homodimer. The cofactor is Mg(2+).

It is found in the cytoplasm. It catalyses the reaction (7R,8S)-7,8-diammoniononanoate + CO2 + ATP = (4R,5S)-dethiobiotin + ADP + phosphate + 3 H(+). Its pathway is cofactor biosynthesis; biotin biosynthesis; biotin from 7,8-diaminononanoate: step 1/2. Functionally, catalyzes a mechanistically unusual reaction, the ATP-dependent insertion of CO2 between the N7 and N8 nitrogen atoms of 7,8-diaminopelargonic acid (DAPA, also called 7,8-diammoniononanoate) to form a ureido ring. The chain is ATP-dependent dethiobiotin synthetase BioD from Bacillus subtilis subsp. natto.